The sequence spans 678 residues: DNA ligase (678 aa).

NAD(+) contacts are provided by residues aspartate 47–aspartate 51, serine 96–leucine 97, and glutamate 122. Residue lysine 124 is the N6-AMP-lysine intermediate of the active site. The NAD(+) site is built by arginine 145, glutamate 182, lysine 300, and lysine 324. Cysteine 418, cysteine 421, cysteine 436, and cysteine 442 together coordinate Zn(2+). One can recognise a BRCT domain in the interval alanine 602–leucine 678.

This sequence belongs to the NAD-dependent DNA ligase family. LigA subfamily. Requires Mg(2+) as cofactor. Mn(2+) is required as a cofactor.

It catalyses the reaction NAD(+) + (deoxyribonucleotide)n-3'-hydroxyl + 5'-phospho-(deoxyribonucleotide)m = (deoxyribonucleotide)n+m + AMP + beta-nicotinamide D-nucleotide.. In terms of biological role, DNA ligase that catalyzes the formation of phosphodiester linkages between 5'-phosphoryl and 3'-hydroxyl groups in double-stranded DNA using NAD as a coenzyme and as the energy source for the reaction. It is essential for DNA replication and repair of damaged DNA. The chain is DNA ligase from Francisella philomiragia subsp. philomiragia (strain ATCC 25017 / CCUG 19701 / FSC 153 / O#319-036).